Consider the following 401-residue polypeptide: Imidazolonepropionase (401 aa).

The Fe(3+) site is built by H66 and H68. H66 and H68 together coordinate Zn(2+). Residues R75, Y138, and H171 each coordinate 4-imidazolone-5-propanoate. Y138 provides a ligand contact to N-formimidoyl-L-glutamate. Fe(3+) is bound at residue H236. A Zn(2+)-binding site is contributed by H236. Q239 serves as a coordination point for 4-imidazolone-5-propanoate. D311 lines the Fe(3+) pocket. D311 lines the Zn(2+) pocket. N313 and G315 together coordinate N-formimidoyl-L-glutamate. T316 is a 4-imidazolone-5-propanoate binding site.

This sequence belongs to the metallo-dependent hydrolases superfamily. HutI family. Requires Zn(2+) as cofactor. Fe(3+) is required as a cofactor.

Its subcellular location is the cytoplasm. The enzyme catalyses 4-imidazolone-5-propanoate + H2O = N-formimidoyl-L-glutamate. The protein operates within amino-acid degradation; L-histidine degradation into L-glutamate; N-formimidoyl-L-glutamate from L-histidine: step 3/3. In terms of biological role, catalyzes the hydrolytic cleavage of the carbon-nitrogen bond in imidazolone-5-propanoate to yield N-formimidoyl-L-glutamate. It is the third step in the universal histidine degradation pathway. This is Imidazolonepropionase from Pseudomonas fluorescens (strain ATCC BAA-477 / NRRL B-23932 / Pf-5).